We begin with the raw amino-acid sequence, 334 residues long: Ornithine carbamoyltransferase subunit I (334 aa).

Carbamoyl phosphate is bound by residues 56–59 (STRT), Gln-83, Arg-107, and 134–137 (HPTQ). L-ornithine contacts are provided by residues Asn-168, Asp-232, and 236–237 (SM). Zn(2+) is bound at residue Cys-274. Carbamoyl phosphate is bound by residues 274–275 (CL) and Arg-320.

Belongs to the aspartate/ornithine carbamoyltransferase superfamily. OTCase family. As to quaternary structure, in E.coli strain K12, trimer of identical or non-identical chains are composed of ArgI (I) and/or ArgF (F). The trimer has the following composition: FFI, FFF, FII, III. E.coli strains B and W, which are known to contain only ArgI, produce only a trimer of identical chains (III).

The protein localises to the cytoplasm. It carries out the reaction carbamoyl phosphate + L-ornithine = L-citrulline + phosphate + H(+). The protein operates within amino-acid biosynthesis; L-arginine biosynthesis; L-arginine from L-ornithine and carbamoyl phosphate: step 1/3. Reversely inhibited by N-(N-Sulfodiaminophosphinyl)-L-ornithine. Zinc is an allosteric regulator of the substrate-bound enzyme and a competitive inhibitor of the free enzyme. Reversibly catalyzes the transfer of the carbamoyl group from carbamoyl phosphate (CP) to the N(epsilon) atom of ornithine (ORN) to produce L-citrulline, which is a substrate for argininosuccinate synthetase, the enzyme involved in the final step in arginine biosynthesis. The chain is Ornithine carbamoyltransferase subunit I from Escherichia coli (strain K12).